The primary structure comprises 73 residues: MKKGIHPDYHMIDVKMTDGTVFQIRSTWGKEGEQMALEIDPLAHPAWTGGTAKLMDTGGRVSKFKNKYAGLGF.

It belongs to the bacterial ribosomal protein bL31 family. Type A subfamily. Part of the 50S ribosomal subunit.

Binds the 23S rRNA. In Cereibacter sphaeroides (strain ATCC 17029 / ATH 2.4.9) (Rhodobacter sphaeroides), this protein is Large ribosomal subunit protein bL31.